The sequence spans 119 residues: Ribonuclease P protein component (119 aa).

Belongs to the RnpA family. In terms of assembly, consists of a catalytic RNA component (M1 or rnpB) and a protein subunit.

The catalysed reaction is Endonucleolytic cleavage of RNA, removing 5'-extranucleotides from tRNA precursor.. Its function is as follows. RNaseP catalyzes the removal of the 5'-leader sequence from pre-tRNA to produce the mature 5'-terminus. It can also cleave other RNA substrates such as 4.5S RNA. The protein component plays an auxiliary but essential role in vivo by binding to the 5'-leader sequence and broadening the substrate specificity of the ribozyme. This Klebsiella pneumoniae (strain 342) protein is Ribonuclease P protein component.